Consider the following 235-residue polypeptide: Probable tetraspanin tspA (235 aa).

The Cytoplasmic segment spans residues Met1 to Pro18. A helical transmembrane segment spans residues Leu19–Ile39. The Extracellular portion of the chain corresponds to Cys40–Pro68. An N-linked (GlcNAc...) asparagine glycan is attached at Asn62. A helical transmembrane segment spans residues Ala69–Ala89. Over Tyr90–Lys93 the chain is Cytoplasmic. A helical transmembrane segment spans residues Leu94 to Val114. The Extracellular segment spans residues Gly115 to Ala200. Asn139, Asn143, and Asn160 each carry an N-linked (GlcNAc...) asparagine glycan. Residues Ala201 to Ile221 traverse the membrane as a helical segment. Over Arg222–Tyr235 the chain is Cytoplasmic.

Belongs to the tetraspanin (TM4SF) family.

The protein localises to the membrane. This chain is Probable tetraspanin tspA (tspA), found in Dictyostelium discoideum (Social amoeba).